A 180-amino-acid polypeptide reads, in one-letter code: Putative pre-16S rRNA nuclease (180 aa).

Basic and acidic residues predominate over residues 1–12; that stretch reads MDAQERSERPDP. Positions 1–23 are disordered; that stretch reads MDAQERSERPDPATDPGRGRRLG.

Belongs to the YqgF nuclease family.

The protein localises to the cytoplasm. Could be a nuclease involved in processing of the 5'-end of pre-16S rRNA. This chain is Putative pre-16S rRNA nuclease, found in Nocardia farcinica (strain IFM 10152).